Reading from the N-terminus, the 304-residue chain is Nicotinamide/nicotinic acid mononucleotide adenylyltransferase 2 (304 aa).

NAD(+)-binding residues include serine 16 and phenylalanine 17. Histidine 24 contributes to the ATP binding site. Positions 92 and 95 each coordinate NAD(+). S-palmitoyl cysteine attachment occurs at residues cysteine 161 and cysteine 162. Residues glycine 197, aspartate 199, leucine 209, tryptophan 210, and arginine 229 each coordinate NAD(+). 268–271 (TKSR) is a binding site for ATP.

Belongs to the eukaryotic NMN adenylyltransferase family. Monomer. It depends on Mg(2+) as a cofactor.

It localises to the golgi apparatus membrane. The protein localises to the cytoplasmic vesicle membrane. The protein resides in the cytoplasm. It is found in the cell projection. Its subcellular location is the axon. The enzyme catalyses beta-nicotinamide D-ribonucleotide + ATP + H(+) = diphosphate + NAD(+). It catalyses the reaction nicotinate beta-D-ribonucleotide + ATP + H(+) = deamido-NAD(+) + diphosphate. It functions in the pathway cofactor biosynthesis; NAD(+) biosynthesis; NAD(+) from nicotinamide D-ribonucleotide: step 1/1. Its pathway is cofactor biosynthesis; NAD(+) biosynthesis; deamido-NAD(+) from nicotinate D-ribonucleotide: step 1/1. In terms of biological role, nicotinamide/nicotinate-nucleotide adenylyltransferase that acts as an axon maintenance factor. Axon survival factor required for the maintenance of healthy axons: acts by delaying Wallerian axon degeneration, an evolutionarily conserved process that drives the loss of damaged axons. Catalyzes the formation of NAD(+) from nicotinamide mononucleotide (NMN) and ATP. Can also use the deamidated form; nicotinic acid mononucleotide (NaMN) as substrate but with a lower efficiency. Also catalyzes the reverse reaction, i.e. the pyrophosphorolytic cleavage of NAD(+). For the pyrophosphorolytic activity prefers NAD(+), NADH and NaAD as substrates and degrades nicotinic acid adenine dinucleotide phosphate (NHD) less effectively. Also acts as an activator of ADP-ribosylation by supporting the catalytic activity of PARP16 and promoting mono-ADP-ribosylation of ribosomes by PARP16. May be involved in the maintenance of axonal integrity. The sequence is that of Nicotinamide/nicotinic acid mononucleotide adenylyltransferase 2 (nmnat2) from Danio rerio (Zebrafish).